The chain runs to 512 residues: 2-isopropylmalate synthase (512 aa).

The Pyruvate carboxyltransferase domain occupies Leu-5–Val-268. Residues Asp-14, His-202, His-204, and Asn-239 each coordinate Mn(2+). The interval Gly-394–Gly-512 is regulatory domain.

This sequence belongs to the alpha-IPM synthase/homocitrate synthase family. LeuA type 1 subfamily. As to quaternary structure, homodimer. Mn(2+) is required as a cofactor.

It is found in the cytoplasm. It catalyses the reaction 3-methyl-2-oxobutanoate + acetyl-CoA + H2O = (2S)-2-isopropylmalate + CoA + H(+). Its pathway is amino-acid biosynthesis; L-leucine biosynthesis; L-leucine from 3-methyl-2-oxobutanoate: step 1/4. Its function is as follows. Catalyzes the condensation of the acetyl group of acetyl-CoA with 3-methyl-2-oxobutanoate (2-ketoisovalerate) to form 3-carboxy-3-hydroxy-4-methylpentanoate (2-isopropylmalate). The sequence is that of 2-isopropylmalate synthase from Acidovorax ebreus (strain TPSY) (Diaphorobacter sp. (strain TPSY)).